We begin with the raw amino-acid sequence, 276 residues long: Secreted RxLR effector protein 120 (276 aa).

The first 21 residues, 1 to 21, serve as a signal peptide directing secretion; that stretch reads MRGAYYVITALLVVASSQTSA. The RxLR-dEER signature appears at 48–65; sequence QSLRGSRDVPDDLAHEER. The disordered stretch occupies residues 97 to 130; it reads GKRPRVAEKDALEKASGADEASKKPRNTATDDAF. Residues 101–119 show a composition bias toward basic and acidic residues; the sequence is RVAEKDALEKASGADEASK.

Belongs to the RxLR effector family.

Its subcellular location is the secreted. The protein resides in the host nucleus. Its function is as follows. Secreted effector that completely suppresses the host cell death induced by cell death-inducing proteins. This chain is Secreted RxLR effector protein 120, found in Plasmopara viticola (Downy mildew of grapevine).